A 248-amino-acid chain; its full sequence is Ribosomal RNA small subunit methyltransferase G (248 aa).

Residues G93, L98, A143 to E144, and R161 each bind S-adenosyl-L-methionine.

It belongs to the methyltransferase superfamily. RNA methyltransferase RsmG family.

The protein localises to the cytoplasm. Functionally, specifically methylates the N7 position of guanine in position 518 of 16S rRNA. This chain is Ribosomal RNA small subunit methyltransferase G, found in Mycobacterium leprae (strain Br4923).